We begin with the raw amino-acid sequence, 110 residues long: Large ribosomal subunit protein uL22 (110 aa).

The protein belongs to the universal ribosomal protein uL22 family. As to quaternary structure, part of the 50S ribosomal subunit.

This protein binds specifically to 23S rRNA; its binding is stimulated by other ribosomal proteins, e.g. L4, L17, and L20. It is important during the early stages of 50S assembly. It makes multiple contacts with different domains of the 23S rRNA in the assembled 50S subunit and ribosome. Its function is as follows. The globular domain of the protein is located near the polypeptide exit tunnel on the outside of the subunit, while an extended beta-hairpin is found that lines the wall of the exit tunnel in the center of the 70S ribosome. This chain is Large ribosomal subunit protein uL22, found in Actinobacillus pleuropneumoniae serotype 5b (strain L20).